Reading from the N-terminus, the 418-residue chain is Replication factor C large subunit (418 aa).

Residue 47-54 coordinates ATP; sequence GSQGTGKT.

It belongs to the activator 1 small subunits family. RfcL subfamily. As to quaternary structure, heteromultimer composed of small subunits (RfcS) and large subunits (RfcL).

Part of the RFC clamp loader complex which loads the PCNA sliding clamp onto DNA. The polypeptide is Replication factor C large subunit (Thermoplasma acidophilum (strain ATCC 25905 / DSM 1728 / JCM 9062 / NBRC 15155 / AMRC-C165)).